The primary structure comprises 335 residues: Corrinoid adenosyltransferase PduO (335 aa).

A heme-binding site is contributed by H206.

This sequence belongs to the Cob(I)alamin adenosyltransferase family. PduO subfamily. In terms of assembly, forms a complex with PduS. It depends on heme b as a cofactor. The cofactor is Mg(2+).

It localises to the bacterial microcompartment. It catalyses the reaction cob(I)alamin-[corrinoid adenosyltransferase] + ATP = apo-[corrinoid adenosyltransferase] + adenosylcob(III)alamin + triphosphate. It functions in the pathway polyol metabolism; 1,2-propanediol degradation. It participates in cofactor biosynthesis; adenosylcobalamin biosynthesis. In terms of biological role, converts cob(I)alamin to adenosylcobalamin (adenosylcob(III)alamin), the cofactor for propanediol dehydratase. Found in the bacterial microcompartment (BMC) dedicated to 1,2-propanediol (1,2-PD) degradation. PduS and PduO allow regeneration of the adenosylcobalamin cofactor within the BMC. Its function is as follows. Expression of a cosmid containing the full 21-gene pdu operon in E.coli allows E.coli to grow on 1,2-propanediol (1,2-PD) with the appearance of bacterial microcompartments (BMC) in its cytoplasm. The 1,2-PD-specific bacterial microcompartment (BMC) concentrates low levels of 1,2-PD catabolic enzymes, concentrates volatile reaction intermediates thus enhancing pathway flux and keeps the level of toxic, mutagenic propionaldehyde low. The polypeptide is Corrinoid adenosyltransferase PduO (Citrobacter freundii).